The chain runs to 496 residues: Cytosol aminopeptidase (496 aa).

Mn(2+) contacts are provided by K258 and D263. The active site involves K270. Mn(2+) contacts are provided by D281, D340, and E342. R344 is a catalytic residue.

This sequence belongs to the peptidase M17 family. Mn(2+) is required as a cofactor.

The protein resides in the cytoplasm. The enzyme catalyses Release of an N-terminal amino acid, Xaa-|-Yaa-, in which Xaa is preferably Leu, but may be other amino acids including Pro although not Arg or Lys, and Yaa may be Pro. Amino acid amides and methyl esters are also readily hydrolyzed, but rates on arylamides are exceedingly low.. The catalysed reaction is Release of an N-terminal amino acid, preferentially leucine, but not glutamic or aspartic acids.. In terms of biological role, presumably involved in the processing and regular turnover of intracellular proteins. Catalyzes the removal of unsubstituted N-terminal amino acids from various peptides. The sequence is that of Cytosol aminopeptidase (pepA) from Helicobacter pylori (strain J99 / ATCC 700824) (Campylobacter pylori J99).